A 329-amino-acid polypeptide reads, in one-letter code: DNA-directed RNA polymerase subunit alpha (329 aa).

An alpha N-terminal domain (alpha-NTD) region spans residues 1–235 (MQGSVTEFLK…EQLEAFVDLR (235 aa)). Residues 249–329 (FDPILLRPVD…NWPPASIADE (81 aa)) form an alpha C-terminal domain (alpha-CTD) region.

Belongs to the RNA polymerase alpha chain family. Homodimer. The RNAP catalytic core consists of 2 alpha, 1 beta, 1 beta' and 1 omega subunit. When a sigma factor is associated with the core the holoenzyme is formed, which can initiate transcription.

The enzyme catalyses RNA(n) + a ribonucleoside 5'-triphosphate = RNA(n+1) + diphosphate. DNA-dependent RNA polymerase catalyzes the transcription of DNA into RNA using the four ribonucleoside triphosphates as substrates. This chain is DNA-directed RNA polymerase subunit alpha, found in Shigella flexneri serotype 5b (strain 8401).